The chain runs to 782 residues: Small RNA degrading nuclease 3 (782 aa).

The Exonuclease domain occupies 145 to 296; sequence MLSIDCEMVT…HDAAAAMKLV (152 aa). The region spanning 331 to 410 is the RRM 1 domain; sequence AQLFLHKIPH…KKAVLKLSSG (80 aa). Positions 426–464 are disordered; the sequence is PCEISTSERARAEENNVSSKRQKTEDETEETKEATVNQR. Positions 469 to 549 constitute an RRM 2 domain; that stretch reads TKLFLHKIPH…KMVVFKLSSG (81 aa). Residues 563-605 are disordered; that stretch reads DSPGEISTTKRARTEESNMSSKRQKTEDESEETKEANAKQREA. The stretch at 577-605 forms a coiled coil; the sequence is EESNMSSKRQKTEDESEETKEANAKQREA. Positions 595-605 are enriched in basic and acidic residues; the sequence is TKEANAKQREA. Residues 608-688 form the RRM 3 domain; the sequence is TKLLLHKIPL…KMVAFKLSSG (81 aa). Residues 709–779 are a coiled coil; that stretch reads ANANHCEDDH…KMKLEKKQSK (71 aa).

Belongs to the REXO1/REXO3 family. As to quaternary structure, associated with the Mediator complex.

It is found in the nucleus. In terms of biological role, 3'-5' exonuclease degrading single-stranded small RNAs. The protein is Small RNA degrading nuclease 3 (SDN3) of Arabidopsis thaliana (Mouse-ear cress).